The chain runs to 894 residues: Translation factor GUF1 homolog, mitochondrial (894 aa).

Residues 157-189 (EDEGLDGGPPPGMEAKKSSSSSSSNNVHSNCSD) are disordered. Over residues 174–188 (SSSSSSSNNVHSNCS) the composition is skewed to low complexity. A tr-type G domain is found at 199 to 376 (ENIRNFCILA…RIVSEIPSPA (178 aa)). GTP-binding positions include 208-215 (AHIDSGKS), 269-273 (DTPGH), and 323-326 (NKID). The tract at residues 649–674 (DHDDCNDNGGSNSDDRSDRSGKNPPD) is disordered.

The protein belongs to the TRAFAC class translation factor GTPase superfamily. Classic translation factor GTPase family. LepA subfamily.

The protein resides in the mitochondrion inner membrane. The enzyme catalyses GTP + H2O = GDP + phosphate + H(+). In terms of biological role, promotes mitochondrial protein synthesis. May act as a fidelity factor of the translation reaction, by catalyzing a one-codon backward translocation of tRNAs on improperly translocated ribosomes. Binds to mitochondrial ribosomes in a GTP-dependent manner. This is Translation factor GUF1 homolog, mitochondrial from Plasmodium knowlesi (strain H).